A 367-amino-acid chain; its full sequence is Polygalacturonase (367 aa).

The signal sequence occupies residues 1–19 (MSIRLIAVLSAASIAVTSA). C27 and C42 form a disulfide bridge. N185 is a glycosylation site (N-linked (GlcNAc...) asparagine). Residues 187–208 (TDQLTIEDTVVKNQDDCIAVNQ) form a PbH1 1 repeat. D201 functions as the Proton donor in the catalytic mechanism. A disulfide bridge connects residues C203 and C219. H223 is an active-site residue. One copy of the PbH1 2 repeat lies at 240-261 (VRNVTFSNSVVRKSRNGIHIKT). Residue N242 is glycosylated (N-linked (GlcNAc...) asparagine). A disulfide bridge connects residues C334 and C339. Residues N343 and N357 are each glycosylated (N-linked (GlcNAc...) asparagine). A disulfide bond links C358 and C367.

This sequence belongs to the glycosyl hydrolase 28 family. Expressed in larval carcasses and gut, and adult gut.

The protein resides in the secreted. It is found in the cell wall. It carries out the reaction (1,4-alpha-D-galacturonosyl)n+m + H2O = (1,4-alpha-D-galacturonosyl)n + (1,4-alpha-D-galacturonosyl)m.. The protein is Polygalacturonase of Phaedon cochleariae (Mustard beetle).